Consider the following 281-residue polypeptide: Elongation factor 1-delta (281 aa).

Ala-2 carries the N-acetylalanine modification. The residue at position 17 (Lys-17) is an N6-acetyllysine. 5 positions are modified to phosphoserine: Ser-37, Ser-44, Ser-60, Ser-86, and Ser-106. The leucine-zipper stretch occupies residues 80–115; the sequence is LIVRIASLEVENQNLRGVVQDLQQAISKLEVRLSTL. Residue Lys-107 is modified to N6-acetyllysine. The span at 115–132 shows a compositional bias: polar residues; sequence LEKSSPTHRATAPQTQHV. Residues 115–172 form a disordered region; it reads LEKSSPTHRATAPQTQHVSPMRQVEPPAKKGATPAEDDEDNDIDLFGSDEEEEDKEAA. Lys-117 is modified (N6-acetyllysine; alternate). Position 117 is an N6-succinyllysine; alternate (Lys-117). Residue Ser-119 is modified to Phosphoserine. Position 129 is a phosphothreonine (Thr-129). A Phosphoserine modification is found at Ser-133. Phosphothreonine is present on Thr-147. Over residues 149 to 169 the composition is skewed to acidic residues; that stretch reads AEDDEDNDIDLFGSDEEEEDK. Ser-162 is modified (phosphoserine; by CK2). The catalytic (GEF) stretch occupies residues 173-281; it reads RLREERLRQY…SVDIAAFNKI (109 aa).

Belongs to the EF-1-beta/EF-1-delta family. As to quaternary structure, EF-1 is composed of 4 subunits: alpha, beta, delta isoform 1, and gamma. Isoform 2 interacts with HSF1 and NFE2L2.

Its subcellular location is the nucleus. Functionally, EF-1-beta and EF-1-delta stimulate the exchange of GDP bound to EF-1-alpha to GTP, regenerating EF-1-alpha for another round of transfer of aminoacyl-tRNAs to the ribosome. In terms of biological role, regulates induction of heat-shock-responsive genes through association with heat shock transcription factors and direct DNA-binding at heat shock promoter elements (HSE). The polypeptide is Elongation factor 1-delta (Eef1d) (Rattus norvegicus (Rat)).